The following is a 1061-amino-acid chain: Translation initiation factor IF-2 (1061 aa).

Disordered regions lie at residues 51 to 199 (FARG…VAVK) and 250 to 460 (AFQA…IPTE). Residues 67 to 77 (NEPKPKIDWSR) show a composition bias toward basic and acidic residues. Low complexity-rich tracts occupy residues 97-113 (VAAA…KAPV), 120-130 (RPSAPRPAVTA), 167-177 (VPQPRQPSAVV), 184-199 (TPAI…VAVK), and 250-278 (AFQA…AEAP). Residues 279 to 291 (PVAPEKPAVPAPP) are compositionally biased toward pro residues. Residues 340-360 (SPGGPGGPGGGYGQRPSGPGG) are compositionally biased toward gly residues. Low complexity predominate over residues 381 to 391 (GFNNGPRPGFG). Gly residues predominate over residues 392-405 (QRPGGFGQRPGMGA). The 177-residue stretch at 552-728 (SRPPVVTVMG…CLVADLGNLK (177 aa)) folds into the tr-type G domain. Residues 561–568 (GHVDHGKT) form a G1 region. Residue 561-568 (GHVDHGKT) coordinates GTP. Residues 586–590 (GITQH) are G2. The segment at 614-617 (DTPG) is G3. Residues 614–618 (DTPGH) and 668–671 (NKID) each bind GTP. The tract at residues 668–671 (NKID) is G4. The G5 stretch occupies residues 704-706 (SAK).

It belongs to the TRAFAC class translation factor GTPase superfamily. Classic translation factor GTPase family. IF-2 subfamily.

It is found in the cytoplasm. Its function is as follows. One of the essential components for the initiation of protein synthesis. Protects formylmethionyl-tRNA from spontaneous hydrolysis and promotes its binding to the 30S ribosomal subunits. Also involved in the hydrolysis of GTP during the formation of the 70S ribosomal complex. This is Translation initiation factor IF-2 from Acidobacterium capsulatum (strain ATCC 51196 / DSM 11244 / BCRC 80197 / JCM 7670 / NBRC 15755 / NCIMB 13165 / 161).